A 452-amino-acid chain; its full sequence is Phosphoglucosamine mutase (452 aa).

The active-site Phosphoserine intermediate is the S98. Residues S98, D239, D241, and D243 each coordinate Mg(2+). S98 is subject to Phosphoserine.

The protein belongs to the phosphohexose mutase family. Mg(2+) is required as a cofactor. Post-translationally, activated by phosphorylation.

It catalyses the reaction alpha-D-glucosamine 1-phosphate = D-glucosamine 6-phosphate. In terms of biological role, catalyzes the conversion of glucosamine-6-phosphate to glucosamine-1-phosphate. The protein is Phosphoglucosamine mutase of Anaplasma marginale (strain Florida).